The following is a 687-amino-acid chain: Triadin (687 aa).

Over 1–47 (MTEITAEGNASITTTVIDNKNGSVPKSPGKVLKRTVTEDIVTTFSSP) the chain is Cytoplasmic. The helical transmembrane segment at 48 to 68 (AAWLLVIALIITWSAVAIVMF) threads the bilayer. Over 69–687 (DLVDYKNFSA…NSPGQKQQEQ (619 aa)) the chain is Lumenal. Positions 117-130 (DGDEDDEDADEDID) are enriched in acidic residues. Disordered stretches follow at residues 117-265 (DGDE…EQKD), 280-643 (GDLK…QKSP), and 660-687 (FQFP…QQEQ). The segment covering 131 to 265 (KGEIEEPPLK…PAVPKHEQKD (135 aa)) has biased composition (basic and acidic residues). Residues 295–306 (LTASRPALSTPS) are compositionally biased toward polar residues. Phosphoserine occurs at positions 303 and 306. Over residues 307-356 (LEEKEKEEKKKVEKKVTSDTKKKEKGEAKKKSEKETVIDGKGKEPGKPPE) the composition is skewed to basic and acidic residues. A compositionally biased stretch (low complexity) spans 357–370 (TKQTTTKLTTQAAA). Composition is skewed to basic and acidic residues over residues 371-390 (TKDE…EEKP), 396-431 (EKKE…KEEI), 442-459 (GKKE…DVKP), and 466-501 (LKKE…KEAK). Residue Asn514 is glycosylated (N-linked (GlcNAc...) asparagine). 2 stretches are compositionally biased toward basic and acidic residues: residues 539-583 (TAEK…KVPP) and 594-630 (TRAE…DKEV). Polar residues-rich tracts occupy residues 631–643 (TNNV…QKSP) and 667–687 (VQHS…QQEQ).

As to quaternary structure, homooligomer of variable subunit number; disulfide-linked. Interacts with CASQ1 in skeletal muscle. Interacts with CASQ2. Interacts with RYR1 in skeletal muscle. In terms of processing, phosphorylated by CaMK2. Post-translationally, N-glycosylated. Detected in skeletal muscle (at protein level). Detected in skeletal muscle.

Its subcellular location is the sarcoplasmic reticulum membrane. The protein resides in the microsome. The protein localises to the cell membrane. It is found in the sarcolemma. In terms of biological role, contributes to the regulation of lumenal Ca2+ release via the sarcoplasmic reticulum calcium release channels RYR1 and RYR2, a key step in triggering skeletal and heart muscle contraction. Required for normal organization of the triad junction, where T-tubules and the sarcoplasmic reticulum terminal cisternae are in close contact. Required for normal skeletal muscle strength. Plays a role in excitation-contraction coupling in the heart and in regulating the rate of heart beats. The sequence is that of Triadin from Rattus norvegicus (Rat).